Consider the following 226-residue polypeptide: uncharacterized protein (226 aa).

The protein belongs to the mimivirus L246/L426 family.

This is an uncharacterized protein from Acanthamoeba polyphaga mimivirus (APMV).